The primary structure comprises 495 residues: Leucine aminopeptidase 2 (495 aa).

A signal peptide spans 1–21; sequence MKSQLLSLAVAVTTISQGVVG. Positions 124 to 218 constitute a PA domain; the sequence is PPASKIMAEL…EDGKNLATLV (95 aa). Asn-142 and Asn-235 each carry an N-linked (GlcNAc...) asparagine glycan. Zn(2+) is bound by residues His-259 and Asp-271. Residue Asn-272 is glycosylated (N-linked (GlcNAc...) asparagine). Glu-303 serves as the catalytic Proton acceptor. Zn(2+) contacts are provided by Glu-304 and Asp-332. Residue Asn-352 is glycosylated (N-linked (GlcNAc...) asparagine). Position 430 (His-430) interacts with Zn(2+).

This sequence belongs to the peptidase M28 family. M28A subfamily. Monomer. The cofactor is Zn(2+).

The protein localises to the secreted. Its activity is regulated as follows. Activity is inhibited by EDTA, o-phenanthroline, bestatin and amastatin. Its function is as follows. Extracellular aminopeptidase that releases a wide variety of amino acids from natural peptides and contributes to pathogenicity. In Trichophyton rubrum (Athlete's foot fungus), this protein is Leucine aminopeptidase 2 (LAP2).